The primary structure comprises 388 residues: Flap endonuclease 1 (388 aa).

The interval 1 to 104 is N-domain; sequence MGILGLSKLI…GELAKRAERR (104 aa). Residue aspartate 34 participates in Mg(2+) binding. DNA contacts are provided by arginine 47 and arginine 70. Mg(2+)-binding residues include aspartate 86, glutamate 158, glutamate 160, aspartate 179, and aspartate 181. Residues 122–253 form an I-domain region; the sequence is EIEKFNRRLV…KRAIELINSY (132 aa). Glutamate 158 serves as a coordination point for DNA. 2 residues coordinate DNA: glycine 231 and aspartate 233. Aspartate 233 is a binding site for Mg(2+). An interaction with PCNA region spans residues 336–344; it reads TQVRLDSFF. A disordered region spans residues 355 to 388; sequence AAAKRKAEEAKKSANNKKAKIGGGGGAGRGRRPK.

Belongs to the XPG/RAD2 endonuclease family. FEN1 subfamily. In terms of assembly, interacts with PCNA. Three molecules of FEN1 bind to one PCNA trimer with each molecule binding to one PCNA monomer. PCNA stimulates the nuclease activity without altering cleavage specificity. It depends on Mg(2+) as a cofactor. Phosphorylated. Phosphorylation upon DNA damage induces relocalization to the nuclear plasma.

Its subcellular location is the nucleus. The protein localises to the nucleolus. The protein resides in the nucleoplasm. It is found in the mitochondrion. Its function is as follows. Structure-specific nuclease with 5'-flap endonuclease and 5'-3' exonuclease activities involved in DNA replication and repair. During DNA replication, cleaves the 5'-overhanging flap structure that is generated by displacement synthesis when DNA polymerase encounters the 5'-end of a downstream Okazaki fragment. It enters the flap from the 5'-end and then tracks to cleave the flap base, leaving a nick for ligation. Also involved in the long patch base excision repair (LP-BER) pathway, by cleaving within the apurinic/apyrimidinic (AP) site-terminated flap. Acts as a genome stabilization factor that prevents flaps from equilibrating into structures that lead to duplications and deletions. Also possesses 5'-3' exonuclease activity on nicked or gapped double-stranded DNA, and exhibits RNase H activity. Also involved in replication and repair of rDNA and in repairing mitochondrial DNA. The protein is Flap endonuclease 1 of Drosophila willistoni (Fruit fly).